We begin with the raw amino-acid sequence, 252 residues long: Ribosomal RNA large subunit methyltransferase E (252 aa).

S-adenosyl-L-methionine contacts are provided by Gly-48, Trp-50, Asp-68, Asp-84, and Asp-107. The active-site Proton acceptor is Lys-147. The 59-residue stretch at 194-252 (PVREGDTLEVEIDNLGDEGDGVAKVDGYTLFVSGAEPGDAPEVRVTDVKPRFGFAETLE) folds into the TRAM domain.

It belongs to the class I-like SAM-binding methyltransferase superfamily. RNA methyltransferase RlmE family.

The protein localises to the cytoplasm. The enzyme catalyses uridine(2552) in 23S rRNA + S-adenosyl-L-methionine = 2'-O-methyluridine(2552) in 23S rRNA + S-adenosyl-L-homocysteine + H(+). In terms of biological role, specifically methylates the uridine in position 2552 of 23S rRNA at the 2'-O position of the ribose in the fully assembled 50S ribosomal subunit. The protein is Ribosomal RNA large subunit methyltransferase E of Natronomonas pharaonis (strain ATCC 35678 / DSM 2160 / CIP 103997 / JCM 8858 / NBRC 14720 / NCIMB 2260 / Gabara) (Halobacterium pharaonis).